The sequence spans 117 residues: Large ribosomal subunit protein bL19 (117 aa).

Belongs to the bacterial ribosomal protein bL19 family.

Functionally, this protein is located at the 30S-50S ribosomal subunit interface and may play a role in the structure and function of the aminoacyl-tRNA binding site. This chain is Large ribosomal subunit protein bL19, found in Shewanella pealeana (strain ATCC 700345 / ANG-SQ1).